The following is a 344-amino-acid chain: 3,4-dihydroxy-2-butanone 4-phosphate synthase (344 aa).

Positions 1-202 (MILRRVTEAL…VSDLISYRLE (202 aa)) are DHBP synthase. Residues 27-28 (RE), Asp32, 139-143 (RTGHT), and Glu163 each bind D-ribulose 5-phosphate. Residue Glu28 participates in Mg(2+) binding. Position 142 (His142) interacts with Mg(2+). The GTP cyclohydrolase II-like stretch occupies residues 203-344 (NESLLKMFCQ…GLKLVETISL (142 aa)).

In the N-terminal section; belongs to the DHBP synthase family. The protein in the C-terminal section; belongs to the GTP cyclohydrolase II family. Mg(2+) serves as cofactor. Mn(2+) is required as a cofactor.

It catalyses the reaction D-ribulose 5-phosphate = (2S)-2-hydroxy-3-oxobutyl phosphate + formate + H(+). It functions in the pathway cofactor biosynthesis; riboflavin biosynthesis; 2-hydroxy-3-oxobutyl phosphate from D-ribulose 5-phosphate: step 1/1. In terms of biological role, catalyzes the conversion of D-ribulose 5-phosphate to formate and 3,4-dihydroxy-2-butanone 4-phosphate. This is 3,4-dihydroxy-2-butanone 4-phosphate synthase (ribB) from Helicobacter pylori (strain J99 / ATCC 700824) (Campylobacter pylori J99).